The primary structure comprises 350 residues: S-adenosylmethionine:tRNA ribosyltransferase-isomerase (350 aa).

It belongs to the QueA family. In terms of assembly, monomer.

It is found in the cytoplasm. It carries out the reaction 7-aminomethyl-7-carbaguanosine(34) in tRNA + S-adenosyl-L-methionine = epoxyqueuosine(34) in tRNA + adenine + L-methionine + 2 H(+). The protein operates within tRNA modification; tRNA-queuosine biosynthesis. In terms of biological role, transfers and isomerizes the ribose moiety from AdoMet to the 7-aminomethyl group of 7-deazaguanine (preQ1-tRNA) to give epoxyqueuosine (oQ-tRNA). This Bacillus thuringiensis subsp. konkukian (strain 97-27) protein is S-adenosylmethionine:tRNA ribosyltransferase-isomerase.